The following is a 609-amino-acid chain: Vanadium chloroperoxidase (609 aa).

Residues lysine 353, arginine 360, serine 402, glycine 403, histidine 404, arginine 490, and histidine 496 each coordinate vanadate. The Proton donor role is filled by histidine 404. The disordered stretch occupies residues 569–609 (KPTPPEIQPMPQETPVQKPVGQQPVKGMWEEEQAPVVKEAP).

Belongs to the vanadium-dependent haloperoxidase family. As to quaternary structure, homotetramer. Vanadate is required as a cofactor. In terms of processing, the N-terminus is blocked.

The protein resides in the secreted. It carries out the reaction RH + Cl(-) + H2O2 = RCl + 2 H2O.. In terms of biological role, catalyzes the oxidation of chloride in the presence of hydrogen peroxide to hypochlorous acid (ClOH), which in turn can react with a nucleophilic acceptor (RH), to form a chlorinated compound. In Curvularia inaequalis (Helminthosporium inaequale), this protein is Vanadium chloroperoxidase (CPO).